The primary structure comprises 207 residues: Ribosomal RNA small subunit methyltransferase G (207 aa).

Residues Gly-73, Leu-78, 124-125 (VE), and Arg-139 each bind S-adenosyl-L-methionine.

The protein belongs to the methyltransferase superfamily. RNA methyltransferase RsmG family.

It localises to the cytoplasm. The enzyme catalyses guanosine(527) in 16S rRNA + S-adenosyl-L-methionine = N(7)-methylguanosine(527) in 16S rRNA + S-adenosyl-L-homocysteine. Its function is as follows. Specifically methylates the N7 position of guanine in position 527 of 16S rRNA. The protein is Ribosomal RNA small subunit methyltransferase G of Escherichia coli O1:K1 / APEC.